The sequence spans 219 residues: Neurotrophic factor BDNF precursor form (219 aa).

A signal peptide spans 1 to 5; sequence SCMKA. A propeptide spanning residues 6–114 is cleaved from the precursor; sequence APMKEVSIRG…AANMSMRVRR (109 aa). N-linked (GlcNAc...) asparagine glycosylation is present at N107. C127 and C194 form a disulfide bridge.

It belongs to the NGF-beta family.

It is found in the secreted. Its function is as follows. Promotes the survival of neuronal populations that are all located either in the central nervous system or directly connected to it. In Loxocemus bicolor (Mexican burrowing python), this protein is Neurotrophic factor BDNF precursor form (BDNF).